The sequence spans 858 residues: Zinc finger protein ZXDC (858 aa).

Disordered regions lie at residues 1-73 (MDLP…GGDS), 85-108 (DTHGQEEAEPDSGASPTEQVPAAA), and 142-175 (AAPSLHPATTPGLEPSSAAASRRGPVAASAGSPA). The span at 59–68 (APGPSPPPPE) shows a compositional bias: pro residues. Residues 142-152 (AAPSLHPATTP) are compositionally biased toward low complexity. 10 consecutive C2H2-type zinc fingers follow at residues 176–200 (YRCPEPQCALSFAKKHQLKVHLLTH), 209–233 (FKCPLDGCGWAFTTSYKLKRHLQSH), 239–263 (FSCPVGGCGKKFTTVYNLKAHMKGH), 269–291 (FKCEVCAERFPTHAKLNSHQRSH), 298–322 (YKCDFPGCEKTFITVSALFSHNRAH), 329–353 (FSCSFPGCNKQYDKACRLKIHLRSH), 359–383 (FICDSDSCGWTFTSMSKLLRHKRKH), 389–413 (FTCPVEGCGKSFTRAEHLKGHSITH), 419–443 (FECPVEGCCARFSARSSLYIHSKKH), and 452–477 (SRCPVSSCNRLFTSKHSMKAHVVRQH). Polar residues predominate over residues 624-634 (DSPALTPSNNL). The disordered stretch occupies residues 624 to 652 (DSPALTPSNNLTAPGTTPTSSDTTQETGS). Over residues 635–651 (TAPGTTPTSSDTTQETG) the composition is skewed to low complexity. A Glycyl lysine isopeptide (Lys-Gly) (interchain with G-Cter in SUMO) cross-link involves residue Lys661. Disordered regions lie at residues 671-714 (DVVQ…LESG) and 727-751 (VKKKKQKGTGSDEGASDSAHRKVKG). Positions 681–692 (GPSQSVLSSSTE) are enriched in polar residues.

The protein belongs to the ZXD family. As to quaternary structure, self-associates. Interacts with ZXDB and CIITA. Post-translationally, sumoylated at Lys-661 with SUMO1, SUMO2 and SUMO3; sumoylation enhances the activity of the transcriptional activation domain.

Its subcellular location is the nucleus. Functionally, cooperates with CIITA to promote transcription of MHC class I and MHC class II genes. This Mus musculus (Mouse) protein is Zinc finger protein ZXDC (Zxdc).